The following is a 1394-amino-acid chain: DNA-directed RNA polymerase subunit beta'' (1394 aa).

Residues cysteine 224, cysteine 295, cysteine 302, and cysteine 305 each contribute to the Zn(2+) site.

It belongs to the RNA polymerase beta' chain family. RpoC2 subfamily. In plastids the minimal PEP RNA polymerase catalytic core is composed of four subunits: alpha, beta, beta', and beta''. When a (nuclear-encoded) sigma factor is associated with the core the holoenzyme is formed, which can initiate transcription. Zn(2+) is required as a cofactor.

Its subcellular location is the plastid. It localises to the chloroplast. It carries out the reaction RNA(n) + a ribonucleoside 5'-triphosphate = RNA(n+1) + diphosphate. DNA-dependent RNA polymerase catalyzes the transcription of DNA into RNA using the four ribonucleoside triphosphates as substrates. This is DNA-directed RNA polymerase subunit beta'' from Cucumis sativus (Cucumber).